Consider the following 145-residue polypeptide: Bacilliredoxin BLi02578/BL01507 (145 aa).

This sequence belongs to the bacilliredoxin family.

The protein is Bacilliredoxin BLi02578/BL01507 of Bacillus licheniformis (strain ATCC 14580 / DSM 13 / JCM 2505 / CCUG 7422 / NBRC 12200 / NCIMB 9375 / NCTC 10341 / NRRL NRS-1264 / Gibson 46).